Consider the following 81-residue polypeptide: Conotoxin ViKr92 (81 aa).

A signal peptide spans 1–22 (MKLTWMMIVAVLFLTAWTFVTA). Residues 23 to 51 (DDTRYKLENPFLKARNELQKLEASQLNER) constitute a propeptide that is removed on maturation. 3 disulfides stabilise this stretch: C53-C70, C60-C74, and C69-C78.

It belongs to the conotoxin O1 superfamily. In terms of tissue distribution, expressed by the venom duct.

The protein resides in the secreted. The polypeptide is Conotoxin ViKr92 (Conus virgo (Virgin cone)).